A 282-amino-acid chain; its full sequence is Protein canopy homolog 3 (282 aa).

The N-terminal stretch at Met1–Ala33 is a signal peptide. Residues Ser53–Thr275 form the Saposin B-type domain. 3 cysteine pairs are disulfide-bonded: Cys55–Cys212, Cys58–Cys200, and Cys110–Cys172. The N-linked (GlcNAc...) asparagine glycan is linked to Asn159. Positions Asn159–Asp185 form a coiled coil. A disordered region spans residues Lys221–Leu282. Acidic residues predominate over residues Asp255–Glu266.

The protein belongs to the canopy family. In terms of assembly, interacts with HSP90B1; this interaction is disrupted in the presence of ATP. Interacts with TLR1, TLR2, TLR4 and TLR9.

Its subcellular location is the endoplasmic reticulum. In terms of biological role, toll-like receptor (TLR)-specific co-chaperone for HSP90B1. Required for proper TLR folding, except that of TLR3, and hence controls TLR exit from the endoplasmic reticulum. Consequently, required for both innate and adaptive immune responses. This chain is Protein canopy homolog 3 (CNPY3), found in Bos taurus (Bovine).